Reading from the N-terminus, the 350-residue chain is Chorismate synthase (350 aa).

Arg48 provides a ligand contact to NADP(+). FMN is bound by residues 125-127, Gly277, 292-296, and Arg318; these read RSS and KPIPS.

Belongs to the chorismate synthase family. In terms of assembly, homotetramer. FMNH2 serves as cofactor.

It carries out the reaction 5-O-(1-carboxyvinyl)-3-phosphoshikimate = chorismate + phosphate. It participates in metabolic intermediate biosynthesis; chorismate biosynthesis; chorismate from D-erythrose 4-phosphate and phosphoenolpyruvate: step 7/7. Catalyzes the anti-1,4-elimination of the C-3 phosphate and the C-6 proR hydrogen from 5-enolpyruvylshikimate-3-phosphate (EPSP) to yield chorismate, which is the branch point compound that serves as the starting substrate for the three terminal pathways of aromatic amino acid biosynthesis. This reaction introduces a second double bond into the aromatic ring system. The protein is Chorismate synthase of Maridesulfovibrio salexigens (strain ATCC 14822 / DSM 2638 / NCIMB 8403 / VKM B-1763) (Desulfovibrio salexigens).